A 350-amino-acid polypeptide reads, in one-letter code: 4-hydroxy-3-methylbut-2-enyl diphosphate reductase (350 aa).

Residue C36 coordinates [4Fe-4S] cluster. (2E)-4-hydroxy-3-methylbut-2-enyl diphosphate is bound by residues H65 and H101. Dimethylallyl diphosphate-binding residues include H65 and H101. 2 residues coordinate isopentenyl diphosphate: H65 and H101. A [4Fe-4S] cluster-binding site is contributed by C123. Residue H151 coordinates (2E)-4-hydroxy-3-methylbut-2-enyl diphosphate. H151 contributes to the dimethylallyl diphosphate binding site. H151 provides a ligand contact to isopentenyl diphosphate. The active-site Proton donor is E153. T192 contacts (2E)-4-hydroxy-3-methylbut-2-enyl diphosphate. Residue C222 coordinates [4Fe-4S] cluster. Residues S250, S251, N252, and S295 each contribute to the (2E)-4-hydroxy-3-methylbut-2-enyl diphosphate site. 4 residues coordinate dimethylallyl diphosphate: S250, S251, N252, and S295. Positions 250, 251, 252, and 295 each coordinate isopentenyl diphosphate.

The protein belongs to the IspH family. The cofactor is [4Fe-4S] cluster.

The catalysed reaction is isopentenyl diphosphate + 2 oxidized [2Fe-2S]-[ferredoxin] + H2O = (2E)-4-hydroxy-3-methylbut-2-enyl diphosphate + 2 reduced [2Fe-2S]-[ferredoxin] + 2 H(+). It carries out the reaction dimethylallyl diphosphate + 2 oxidized [2Fe-2S]-[ferredoxin] + H2O = (2E)-4-hydroxy-3-methylbut-2-enyl diphosphate + 2 reduced [2Fe-2S]-[ferredoxin] + 2 H(+). The protein operates within isoprenoid biosynthesis; dimethylallyl diphosphate biosynthesis; dimethylallyl diphosphate from (2E)-4-hydroxy-3-methylbutenyl diphosphate: step 1/1. It functions in the pathway isoprenoid biosynthesis; isopentenyl diphosphate biosynthesis via DXP pathway; isopentenyl diphosphate from 1-deoxy-D-xylulose 5-phosphate: step 6/6. Its function is as follows. Catalyzes the conversion of 1-hydroxy-2-methyl-2-(E)-butenyl 4-diphosphate (HMBPP) into a mixture of isopentenyl diphosphate (IPP) and dimethylallyl diphosphate (DMAPP). Acts in the terminal step of the DOXP/MEP pathway for isoprenoid precursor biosynthesis. The chain is 4-hydroxy-3-methylbut-2-enyl diphosphate reductase from Rhizobium meliloti (strain 1021) (Ensifer meliloti).